Consider the following 412-residue polypeptide: Probable histone-binding protein rba-1 (412 aa).

WD repeat units lie at residues 117–157 (NHPG…SEPK), 169–209 (GHEG…TISG), 219–259 (GHSS…PQLT), 262–302 (GHTA…KKMY), 306–346 (HHND…DPSS), and 365–405 (GHTG…VSSE).

This sequence belongs to the WD repeat RBAP46/RBAP48/MSI1 family. As to quaternary structure, binds directly to helix 1 of the histone fold of histone H4, a region that is not accessible when H4 is in chromatin. Interacts with zft-11; the interaction is required to suppress the activation of non-neuronal genes in neurons.

Its subcellular location is the nucleus. Functionally, core histone-binding subunit that may target chromatin assembly factors, chromatin remodeling factors and histone deacetylases to their histone substrates in a manner that is regulated by nucleosomal DNA. Plays a role in regulating cell cycle progression. Required to repress the induction of vulval development by Ras signaling. In association with the zinc finger protein ztf-11, negatively regulates the expression of non-neuronal genes during neurogenesis. The chain is Probable histone-binding protein rba-1 from Caenorhabditis elegans.